Consider the following 97-residue polypeptide: MNSKLTVIVLLALITIASCGLINEKKVQQYLDEKLPNGVVKGALKSLVHKAAKNQNLCAFNVDTVGMCDADCKRQGKAKGVCHGTKCKCDVELSYKK.

A signal peptide spans 1 to 19 (MNSKLTVIVLLALITIASC). Residues 55–95 (QNLCAFNVDTVGMCDADCKRQGKAKGVCHGTKCKCDVELSY) enclose the BetaSPN-type CS-alpha/beta domain. 3 cysteine pairs are disulfide-bonded: Cys-58–Cys-82, Cys-68–Cys-87, and Cys-72–Cys-89.

This sequence belongs to the long chain scorpion toxin family. Class 3 subfamily. Expressed by the venom gland.

The protein resides in the secreted. Functionally, selectively inhibits Kv1.3/KCNA3 channel (IC(50)=0.95 uM). Both N-terminal and C-terminal domains are likely involved in the interaction with Kv1.3/KCNA3, since neither its N-terminal domain (1-36) nor its C-terminal domain (37-78) block Kv1.3/KCNA3 channel. The protein is Scorpine-like peptide Ev37 of Euscorpiops validus (Scorpion).